The primary structure comprises 1052 residues: RTX-III toxin determinant A from serotype 8 (1052 aa).

3 helical membrane-spanning segments follow: residues 248-265 (GLDIISSLLSGVTASFAL), 275-334 (KVAA…LRVA), and 372-418 (DASI…GILE). 6 Hemolysin-type calcium-binding repeats span residues 744–761 (KGSKFRDIFHGADGDDLL), 762–779 (NGNDGDDILYGDKGNDEL), 780–797 (RGDNGNDQLYGGEGNDKL), 798–815 (LGGNGNNYLSGGDGNDEL), 826–843 (RGGKGDDKLYGSSGSDLL), and 844–861 (DGGEGNDYLEGGDGSDFY).

The protein belongs to the RTX prokaryotic toxin (TC 1.C.11) family. Post-translationally, palmitoylated by ApxIIIC. The toxin only becomes active when modified.

It localises to the secreted. The protein localises to the host cell membrane. In terms of biological role, does not have hemolytic activity but shows a strong cytotoxicity towards alveolar macrophages and neutrophils. This is RTX-III toxin determinant A from serotype 8 (apxIIIA) from Actinobacillus pleuropneumoniae (Haemophilus pleuropneumoniae).